The sequence spans 452 residues: UDP-N-acetylmuramoylalanine--D-glutamate ligase (452 aa).

115–121 provides a ligand contact to ATP; that stretch reads GTNGKTT.

The protein belongs to the MurCDEF family.

It is found in the cytoplasm. It carries out the reaction UDP-N-acetyl-alpha-D-muramoyl-L-alanine + D-glutamate + ATP = UDP-N-acetyl-alpha-D-muramoyl-L-alanyl-D-glutamate + ADP + phosphate + H(+). Its pathway is cell wall biogenesis; peptidoglycan biosynthesis. Its function is as follows. Cell wall formation. Catalyzes the addition of glutamate to the nucleotide precursor UDP-N-acetylmuramoyl-L-alanine (UMA). This is UDP-N-acetylmuramoylalanine--D-glutamate ligase from Geobacter sp. (strain M21).